The sequence spans 36 residues: Glucagon (36 aa).

This sequence belongs to the glucagon family. Produced by the X-cells of the islets of pancreas.

The protein resides in the secreted. Promotes hydrolysis of glycogen and lipids, and raises the blood sugar level. The chain is Glucagon (gcg) from Hydrolagus colliei (Spotted ratfish).